Reading from the N-terminus, the 72-residue chain is Small proline-rich protein 2B (72 aa).

Low complexity predominate over residues 1-11 (MSYQQQQCKQP). Residues 1–20 (MSYQQQQCKQPCQPPPVCPT) are disordered. 3 repeat units span residues 21–29 (PKCPEPCPP), 30–38 (PKCPEPCPP), and 39–47 (PKCPQPCPP). Positions 21-47 (PKCPEPCPPPKCPEPCPPPKCPQPCPP) are 3 X 9 AA tandem repeats of P-K-C-P-[EQ]-P-C-P-P. Residues 42–72 (PQPCPPQQCQQKYPPVTPSPPCQPKYPPKSK) are disordered. Pro residues predominate over residues 56–72 (PVTPSPPCQPKYPPKSK).

Belongs to the cornifin (SPRR) family. Suprabasal layers of squamous-differentiated tissues such as epidermis, esophagus, tongue and trachea.

The protein localises to the cytoplasm. Cross-linked envelope protein of keratinocytes. It is a keratinocyte protein that first appears in the cell cytosol, but ultimately becomes cross-linked to membrane proteins by transglutaminase. All that results in the formation of an insoluble envelope beneath the plasma membrane. The protein is Small proline-rich protein 2B (SPRR2B) of Homo sapiens (Human).